A 319-amino-acid polypeptide reads, in one-letter code: Aspartate carbamoyltransferase catalytic subunit (319 aa).

Residues Arg-55 and Thr-56 each contribute to the carbamoyl phosphate site. L-aspartate is bound at residue Lys-83. Carbamoyl phosphate contacts are provided by Arg-105, His-144, and Gln-147. L-aspartate contacts are provided by Arg-177 and Arg-231. Gly-272 and Pro-273 together coordinate carbamoyl phosphate.

It belongs to the aspartate/ornithine carbamoyltransferase superfamily. ATCase family. Heterododecamer (2C3:3R2) of six catalytic PyrB chains organized as two trimers (C3), and six regulatory PyrI chains organized as three dimers (R2).

The enzyme catalyses carbamoyl phosphate + L-aspartate = N-carbamoyl-L-aspartate + phosphate + H(+). The protein operates within pyrimidine metabolism; UMP biosynthesis via de novo pathway; (S)-dihydroorotate from bicarbonate: step 2/3. Its function is as follows. Catalyzes the condensation of carbamoyl phosphate and aspartate to form carbamoyl aspartate and inorganic phosphate, the committed step in the de novo pyrimidine nucleotide biosynthesis pathway. This is Aspartate carbamoyltransferase catalytic subunit from Nocardia farcinica (strain IFM 10152).